The sequence spans 447 residues: Na(+)-translocating NADH-quinone reductase subunit A (447 aa).

It belongs to the NqrA family. Composed of six subunits; NqrA, NqrB, NqrC, NqrD, NqrE and NqrF.

The catalysed reaction is a ubiquinone + n Na(+)(in) + NADH + H(+) = a ubiquinol + n Na(+)(out) + NAD(+). In terms of biological role, NQR complex catalyzes the reduction of ubiquinone-1 to ubiquinol by two successive reactions, coupled with the transport of Na(+) ions from the cytoplasm to the periplasm. NqrA to NqrE are probably involved in the second step, the conversion of ubisemiquinone to ubiquinol. This is Na(+)-translocating NADH-quinone reductase subunit A from Neisseria gonorrhoeae (strain ATCC 700825 / FA 1090).